Here is a 472-residue protein sequence, read N- to C-terminus: MGCTVSTQTIGDESDPFLQNKRANDVIEQSLQLEKQRDKNEIKLLLLGAGESGKSTVLKQLKLLHQGGFSHQERLQYAQVIWADAIQSMKILIIQARKLGIQLDCDDPINNKDLFACKRILLKAKALDYINASVAGGSDFLNDYVLKYSERYETRRRVQSTGRAKAAFDEDGNISNVKSDTDRDAETVTQNEDADRNNSSRINLQDICKDLNQEGDDQMFVRKTSREIQGQNRRNLIHEDIAKAIKQLWNNDKGIKQCFARSNEFQLEGSAAYYFDNIEKFASPNYVCTDEDILKGRIKTTGITETEFNIGSSKFKVLDAGGQRSERKKWIHCFEGITAVLFVLAMSEYDQMLFEDERVNRMHESIMLFDTLLNSKWFKDTPFILFLNKIDLFEEKVKSMPIRKYFPDYQGRVGDAEAGLKYFEKIFLSLNKTNKPIYVKRTCATDTQTMKFVLSAVTDLIIQQNLKKIGII.

G2 is lipidated: N-myristoyl glycine. C3 is lipidated: S-palmitoyl cysteine. The 433-residue stretch at N40 to I472 folds into the G-alpha domain. A G1 motif region spans residues K43–T56. The GTP site is built by E51, S52, G53, K54, S55, and T56. Mg(2+) is bound at residue S55. The segment at L127 to N235 is insert; not present in other G-proteins. Residues G162–S199 are disordered. A Glycyl lysine isopeptide (Lys-Gly) (interchain with G-Cter in ubiquitin) cross-link involves residue K165. Positions D292–T300 are G2 motif. Positions 294, 300, 322, 388, 389, 391, and 444 each coordinate GTP. T300 provides a ligand contact to Mg(2+). A G3 motif region spans residues F315–R324. The G4 motif stretch occupies residues I384–D391. The segment at T442–T447 is G5 motif.

The protein belongs to the G-alpha family. G(q) subfamily. As to quaternary structure, g proteins are composed of 3 units; alpha, beta and gamma. The alpha chain contains the guanine nucleotide binding site. In its GDP-bound form, binds to the G protein beta-gamma dimer STE4-STE18. Directly interacts with the beta subunit STE4. Probably forms preactivation complexes with unligated receptors STE2 and STE3. Interacts with FUS3. Pheromone-induced activation of GPA1 increases its association with FUS3. Interacts with SCP160. SCP160 binds specifically to the GTP-bound form of GPA1. Interacts with the phosphatidylinositol 3-kinase (PI3K) subunits VPS15 and VPS34 at the endosome. The GTP-bound form of GPA1 binds directly and selectively to the catalytic subunit VPS34, while the GDP-bound form binds to VPS15, which appears to function as an alternative G protein beta subunit for GPA1. Interacts with regulators of G protein signaling (RGS) proteins MDM1, RAX1, RGS2 and SST2, but SST2 alone binds preferentially to the transition state conformation of GPA1, indicating that it acts as a GAP for this G protein. Mg(2+) serves as cofactor. Post-translationally, N-myristoylation by NMT1 is pheromone-stimulated and required for palmitoylation of Cys-3. This lipid modification anchors the protein to membranes. Depalmitoylated by YLR118C/APT1. In terms of processing, monoubiquitination targets the protein for degradation to the vacuole, and polyubiquitination tags the protein for degradation by the proteasome. This may be an additional signaling regulation mechanism.

It is found in the cell membrane. The protein localises to the endosome membrane. Its activity is regulated as follows. Alternates between an inactive form bound to GDP and an active form bound to GTP. Activated by the G protein coupled receptors (GPCRs) STE2 and STE3, which serve as guanine nucleotide-exchange factors (GEFs), and inactivated by SST2, probably acting as a GTPase-activating protein (GAP). Alpha subunit of the heterotrimeric guanine nucleotide-binding protein (G protein) that mediates mating pheromone signal transduction. Binding of alpha-factor or a-factor to its cognate transmembrane receptor STE2 and STE3, respectively, allows the receptor to serve as a guanine nucleotide exchange factor (GEF) on GPA1. The exchange of GDP for GTP on the G protein alpha subunit alters its interaction with the G protein beta subunit STE4, leading to dissociation of the G protein beta-gamma dimer STE4-STE18. The dissociated subunits activate downstream effectors to activate the mating response pathway and induce changes necessary to produce mating-competent cells. STE4-STE18 activate the downstream pheromone signaling MAP kinase cascade leading to expression of mating-specific genes, inducing cell cycle arrest in G1, promoting polarized cell growth to form mating projections (shmoos), and establishing the changes in plasma membrane, cell wall and nuclear envelope to permit cell-cell fusion (plasmogamy) and fusion of the two haploid nuclei (karyogamy). GPA1 transmits a signal that requires direct binding to the effector enzyme PI3K located at the endosome, promoting increased PI3 production. The intrinsic GTPase activity of GPA1 determines the duration of signaling, and is dramatically accelerated by the RGS protein SST2. In unstimulated cells, GDP-bound GPA1 sequesters the G protein beta-gamma subunit STE4-STE18, preventing it from activating the downstream effectors. Also down-regulates the signal by inhibiting the pheromone-induced accumulation of FUS3 in the nucleus. This Saccharomyces cerevisiae (strain ATCC 204508 / S288c) (Baker's yeast) protein is Guanine nucleotide-binding protein alpha-1 subunit (GPA1).